The primary structure comprises 343 residues: ELAV-like protein 3 (343 aa).

RRM domains lie at 35–113 (TNLI…YARP), 121–202 (ANLY…FANN), and 260–338 (WCIF…FKTS).

It belongs to the RRM elav family.

RNA-binding protein that binds to AU-rich sequences (AREs) of target mRNAs. May also bind poly-A tracts via RRM 3. May be involved in neuronal differentiation and maintenance. The polypeptide is ELAV-like protein 3 (Xenopus tropicalis (Western clawed frog)).